The chain runs to 207 residues: Small ribosomal subunit protein uS4 (207 aa).

Positions 33–54 are disordered; it reads KLDSKPGQHGRTSGARTSDYGN. A compositionally biased stretch (polar residues) spans 42 to 53; it reads GRTSGARTSDYG. The 61-residue stretch at 97–157 folds into the S4 RNA-binding domain; sequence SRLDNVVYRM…EKSKKQVRIA (61 aa).

This sequence belongs to the universal ribosomal protein uS4 family. As to quaternary structure, part of the 30S ribosomal subunit. Contacts protein S5. The interaction surface between S4 and S5 is involved in control of translational fidelity.

In terms of biological role, one of the primary rRNA binding proteins, it binds directly to 16S rRNA where it nucleates assembly of the body of the 30S subunit. Functionally, with S5 and S12 plays an important role in translational accuracy. This is Small ribosomal subunit protein uS4 from Ralstonia pickettii (strain 12J).